Here is a 217-residue protein sequence, read N- to C-terminus: Phosphatidylserine decarboxylase proenzyme (217 aa).

The Schiff-base intermediate with substrate; via pyruvic acid role is filled by serine 183. Serine 183 carries the post-translational modification Pyruvic acid (Ser); by autocatalysis.

This sequence belongs to the phosphatidylserine decarboxylase family. PSD-A subfamily. In terms of assembly, heterodimer of a large membrane-associated beta subunit and a small pyruvoyl-containing alpha subunit. Pyruvate serves as cofactor. Is synthesized initially as an inactive proenzyme. Formation of the active enzyme involves a self-maturation process in which the active site pyruvoyl group is generated from an internal serine residue via an autocatalytic post-translational modification. Two non-identical subunits are generated from the proenzyme in this reaction, and the pyruvate is formed at the N-terminus of the alpha chain, which is derived from the carboxyl end of the proenzyme. The post-translation cleavage follows an unusual pathway, termed non-hydrolytic serinolysis, in which the side chain hydroxyl group of the serine supplies its oxygen atom to form the C-terminus of the beta chain, while the remainder of the serine residue undergoes an oxidative deamination to produce ammonia and the pyruvoyl prosthetic group on the alpha chain.

Its subcellular location is the cell membrane. The catalysed reaction is a 1,2-diacyl-sn-glycero-3-phospho-L-serine + H(+) = a 1,2-diacyl-sn-glycero-3-phosphoethanolamine + CO2. It functions in the pathway phospholipid metabolism; phosphatidylethanolamine biosynthesis; phosphatidylethanolamine from CDP-diacylglycerol: step 2/2. Functionally, catalyzes the formation of phosphatidylethanolamine (PtdEtn) from phosphatidylserine (PtdSer). The polypeptide is Phosphatidylserine decarboxylase proenzyme (Cupriavidus metallidurans (strain ATCC 43123 / DSM 2839 / NBRC 102507 / CH34) (Ralstonia metallidurans)).